Consider the following 792-residue polypeptide: MSNNGSSPLVLWYNQLGMNDVDRVGGKNASLGEMITNLSGMGVSVPNGFATTADAFNQFLDQSGVNQRIYELLDKTDIDDVTQLAKAGAQIRQWIIDTPFQPELENAIREAYAQLSADDENASFAVRSSATAEDMPDASFAGQQETFLNVQGFDAVLVAVKHVFASLFNDRAISYRVHQGYDHRGVALSAGVQRMVRSDLASSGVMFSIDTESGFDQVVFITSAWGLGEMVVQGAVNPDEFYVHKPTLAANRPAIVRRTMGSKKIRMVYAPTQEHGKQVKIEDVPQEQRDIFSLTNEEVQELAKQAVQIEKHYGRPMDIEWAKDGHTGKLFIVQARPETVRSRGQVMERYTLHSQGKIIAEGRAIGHRIGAGPVKVIHDISEMNRIEPGDVLVTDMTDPDWEPIMKKASAIVTNRGGRTCHAAIIARELGIPAVVGCGDATERMKDGENVTVSCAEGDTGYVYAELLEFSVKSSSVETMPDLPLKVMMNVGNPDRAFDFACLPNEGVGLARLEFIINRMIGVHPRALLEFDDQEPQLQNEIREMMKGFDSPREFYVGRLTEGIATLGAAFYPKRVIVRLSDFKSNEYANLVGGERYEPDEENPMLGFRGAGRYVSDSFRDCFALECEAVKRVRNDMGLTNVEIMIPFVRTVDQAKAVVEELARQGLKRGENGLKIIMMCEIPSNALLAEQFLEYFDGFSIGSNDMTQLALGLDRDSGVVSELFDERNDAVKALLSMAIRAAKKQGKYVGICGQGPSDHEDFAAWLMEEGIDSLSLNPDTVVQTWLSLAELKK.

Residue His-421 is the Tele-phosphohistidine intermediate of the active site. Substrate contacts are provided by Arg-511, Arg-578, Glu-680, Gly-701, Ser-702, Asn-703, and Asp-704. Residue Glu-680 coordinates Mg(2+). Residue Asp-704 coordinates Mg(2+). The active-site Proton donor is the Cys-751.

The protein belongs to the PEP-utilizing enzyme family. In terms of assembly, homodimer. It depends on Mg(2+) as a cofactor.

It catalyses the reaction pyruvate + ATP + H2O = phosphoenolpyruvate + AMP + phosphate + 2 H(+). The protein operates within carbohydrate biosynthesis; gluconeogenesis. Its activity is regulated as follows. Activated by a Pi-dependent pyrophosphorylation and inactivated by an ADP-dependent phosphorylation on a regulatory threonine. Both reactions are mediated by the bifunctional serine/threonine kinase and phosphorylase PpsR. Its function is as follows. Catalyzes the phosphorylation of pyruvate to phosphoenolpyruvate. The protein is Phosphoenolpyruvate synthase (ppsA) of Escherichia coli (strain K12).